A 1041-amino-acid polypeptide reads, in one-letter code: Cullin-associated NEDD8-dissociated protein 1, C-terminal part (1041 aa).

Disordered stretches follow at residues 1–24 and 64–103; these read MSSDAMSDYSHDDEHDPQTDELRE and DMGEDEEMSGTQDDGSEDDVTEEPDLEDDDFEDFEEEGGY. The segment covering 9–24 has biased composition (basic and acidic residues); the sequence is YSHDDEHDPQTDELRE. Over residues 65 to 103 the composition is skewed to acidic residues; that stretch reads MGEDEEMSGTQDDGSEDDVTEEPDLEDDDFEDFEEEGGY. The HEAT 1 repeat unit spans residues 138-176; that stretch reads SLYQQIAPAIVARFNKEREESVKLELVSTMDALVRKTAE. The segment at 189–237 is disordered; it reads SVGSGSKISRKRRRQDSDASMIDFEPSMGTSSAAGTPLAAPSSPQSGPQ. Over residues 225–237 the composition is skewed to low complexity; it reads PLAAPSSPQSGPQ. HEAT repeat units lie at residues 242-279, 339-376, 434-472, 479-516, 525-560, 598-637, 670-708, 710-744, 780-817, and 822-867; these read NALPVIVRSLVTMWKQASIHLKQAIIILLKSLALVRYG, PFLIALIPGVIVAVNDKNYKVSSEALAAVEQIVKALTP, LSFEKRSKGLVTLVDRLKNETTRLSAVRAIDDVAVLCSR, NWVREVTAELGAQLRKSDRVLRSASLETLRSLSMNPNT, MKNLEECLIPLISVEDVHLLAPSLIIIAKLVPGNAQ, GSGLTLMQNLLQDVGVNGDTSVVGRSIGTLLVHGGSNVGV, GASCSLTPNVFIPHFNSKSEKVRLASATALGNAAAGNVK, YLPTILGGLEKSDPQSYLLLHSVKELLQHPEMVRR, LDPPAYIPQFQEYLANGDAGIRSIVVSAFRFTLSDSRD, and VLRP…HLGE.

It belongs to the CAND family. As to quaternary structure, interacts with candA-N. Interacts with unneddylated cullins culA and culD.

It localises to the nucleus. In terms of biological role, assembly factor of SCF (SKP1-CUL1-F-box protein) E3 ubiquitin ligase complexes that promotes the exchange of the substrate-recognition F-box subunit in SCF complexes, thereby playing a key role in the cellular repertoire of SCF complexes. Acts as a F-box protein exchange factor when interacting with candA-N. The chain is Cullin-associated NEDD8-dissociated protein 1, C-terminal part (candA-C) from Emericella nidulans (strain FGSC A4 / ATCC 38163 / CBS 112.46 / NRRL 194 / M139) (Aspergillus nidulans).